Reading from the N-terminus, the 382-residue chain is Dual-specificity RNA methyltransferase RlmN (382 aa).

The Proton acceptor role is filled by E95. Positions 101–348 constitute a Radical SAM core domain; the sequence is EDDRGTLCIS…TTVRKTRGDD (248 aa). The cysteines at positions 108 and 353 are disulfide-linked. [4Fe-4S] cluster contacts are provided by C115, C119, and C122. Residues 179-180, S211, 233-235, and N310 contribute to the S-adenosyl-L-methionine site; these read GE and SLH. The S-methylcysteine intermediate role is filled by C353.

The protein belongs to the radical SAM superfamily. RlmN family. Requires [4Fe-4S] cluster as cofactor.

It localises to the cytoplasm. The enzyme catalyses adenosine(2503) in 23S rRNA + 2 reduced [2Fe-2S]-[ferredoxin] + 2 S-adenosyl-L-methionine = 2-methyladenosine(2503) in 23S rRNA + 5'-deoxyadenosine + L-methionine + 2 oxidized [2Fe-2S]-[ferredoxin] + S-adenosyl-L-homocysteine. It carries out the reaction adenosine(37) in tRNA + 2 reduced [2Fe-2S]-[ferredoxin] + 2 S-adenosyl-L-methionine = 2-methyladenosine(37) in tRNA + 5'-deoxyadenosine + L-methionine + 2 oxidized [2Fe-2S]-[ferredoxin] + S-adenosyl-L-homocysteine. Functionally, specifically methylates position 2 of adenine 2503 in 23S rRNA and position 2 of adenine 37 in tRNAs. m2A2503 modification seems to play a crucial role in the proofreading step occurring at the peptidyl transferase center and thus would serve to optimize ribosomal fidelity. The sequence is that of Dual-specificity RNA methyltransferase RlmN from Bordetella pertussis (strain Tohama I / ATCC BAA-589 / NCTC 13251).